The sequence spans 558 residues: Two-component response regulator-like APRR5 (558 aa).

A Response regulatory domain is found at 51-169 (RVLLVEADDS…ELRNLWQHVW (119 aa)). The segment at 180–233 (FPWNESVGQQKAEGASANNSNGKRDDHVVSGNGGDAQSSCTRPEMEGESADVEV) is disordered. Residues 240 to 260 (QMECAKSQFNETRLLANELQS) are a coiled coil. 2 disordered regions span residues 297 to 319 (SLRR…HPSS) and 535 to 558 (KKLA…TQAP). Positions 303–319 (ASENQSSGDRPSLHPSS) are enriched in polar residues. Positions 509 to 551 (REAALTKFRMKRKDRCYEKKVRYESRKKLAEQRPRIKGQFVRQ) constitute a CCT domain.

It belongs to the ARR-like family. Interacts with ADO1 and ADO2. Interacts with SPY (via N-terminus). In terms of processing, phosphorylation varies throughout the diurnal cycle and enhances ADO1 binding. O-fucosylated by SPY. O-fucosylation promotes APRR5 proteolysis.

It is found in the nucleus. Its function is as follows. Transcriptional repressor of CCA1 and LHY, thereby controlling photoperiodic flowering response. Involved in the positive and negative feedback loops of the circadian clock. With RVE8, forms a negative feedback loop of the circadian clock. Expression of several members of the ARR-like family is controlled by circadian rhythm. Proteolytic substrate of the E3 ubiquitin ligase SCF(ADO1) complex. APRR9, APRR7, and APRR5 coordinately act on the upstream region of the target genes to repress their expression from noon until midnight. The particular coordinated sequential expression of APRR9, APRR7, APRR5, APRR3 and APPR1 result to circadian waves that may be at the basis of the endogenous circadian clock. Negative regulator of shade avoidance response. Involved in the inhibition of leaf expansion in shade avoidance response. The chain is Two-component response regulator-like APRR5 (APRR5) from Arabidopsis thaliana (Mouse-ear cress).